Reading from the N-terminus, the 93-residue chain is MACQRHLLFLLLVLFAVSTQLSHGQHWSHGWYPGGKRELDMPASPEVSEEIKLCEGEECAYLRNPRKNLLKNILGRSNQKKNADVLARQLQKK.

An N-terminal signal peptide occupies residues methionine 1–glycine 24. Glutamine 25 is modified (pyrrolidone carboxylic acid). Glycine 34 is subject to Glycine amide.

It belongs to the GnRH family. As to expression, midbrain and hindbrain.

Its subcellular location is the secreted. Stimulates the secretion of gonadotropins. This chain is Progonadoliberin-2 (gnrh2), found in Aquarana catesbeiana (American bullfrog).